A 238-amino-acid polypeptide reads, in one-letter code: Uridylate kinase (238 aa).

12 to 15 (KLSG) serves as a coordination point for ATP. Residues 20–25 (GQQGFG) are involved in allosteric activation by GTP. Gly-54 is a binding site for UMP. Gly-55 and Arg-59 together coordinate ATP. UMP-binding positions include Asp-74 and 135-142 (TGNPFFTT). Thr-162, Asn-163, Tyr-168, and Asp-171 together coordinate ATP.

Belongs to the UMP kinase family. As to quaternary structure, homohexamer.

It localises to the cytoplasm. The enzyme catalyses UMP + ATP = UDP + ADP. Its pathway is pyrimidine metabolism; CTP biosynthesis via de novo pathway; UDP from UMP (UMPK route): step 1/1. With respect to regulation, allosterically activated by GTP. Inhibited by UTP. Its function is as follows. Catalyzes the reversible phosphorylation of UMP to UDP. The sequence is that of Uridylate kinase from Bradyrhizobium diazoefficiens (strain JCM 10833 / BCRC 13528 / IAM 13628 / NBRC 14792 / USDA 110).